The sequence spans 221 residues: MQAIILCGGLGTRLKSIIKDIPKPMAPINDKPFLEFIFEYLKKQGIKEVILAVSYKYEVIKEYFKDEFLGIKIKYSIEKEPLGTGGAIKETLKFVKNEAYVLNGDTFFDIDLSKLKLNESKICLALKQMNDFDRYGTVNVDEQDLVISFEEKVFKKQGLINGGIYLLTKDIFNDFALQEKFSFEEFLQENYKKLKARACIFDDYFIDIGVPEDYYHFLINN.

Belongs to the D-alpha-D-heptose-1-P guanylyltransferase family.

The enzyme catalyses D-glycero-alpha-D-manno-heptose 1-phosphate + GTP + H(+) = GDP-D-glycero-alpha-D-manno-heptose + diphosphate. Its pathway is nucleotide-sugar biosynthesis; GDP-D-glycero-alpha-D-manno-heptose biosynthesis; GDP-D-glycero-alpha-D-manno-heptose from D-glycero-alpha-D-manno-heptose 7-phosphate: step 3/3. The protein operates within capsule biogenesis; capsule polysaccharide biosynthesis. Functionally, catalyzes the GDP transfer from GTP to D-glycero-alpha-D-manno-heptose 1-phosphate, yielding GDP-D-alpha-D-heptose. Is able to use ATP, CTP or UTP as substrate in the presence of pyrophosphatase, but at a significantly slower rate. Can also form GDP-alpha-D-mannose from alpha-D-mannose 1-phosphate and GTP. This chain is D-glycero-alpha-D-manno-heptose 1-phosphate guanylyltransferase, found in Campylobacter jejuni subsp. jejuni serotype O:2 (strain ATCC 700819 / NCTC 11168).